The chain runs to 88 residues: Putative transposase InsN for insertion sequence element IS911B (88 aa).

The protein belongs to the transposase 8 family.

Involved in the transposition of the insertion sequence IS911. The protein is Putative transposase InsN for insertion sequence element IS911B (insN2) of Escherichia coli (strain K12).